Consider the following 992-residue polypeptide: ATP-dependent DNA helicase PIF7 (992 aa).

The N-terminal 21 residues, 1 to 21 (MWDGPLRSRQNLRTVAKLRSS), are a transit peptide targeting the mitochondrion. Disordered stretches follow at residues 20-43 (SSGC…GETA), 145-182 (TVNK…TAAS), and 190-209 (LDSS…AVTQ). 3 stretches are compositionally biased toward polar residues: residues 23-43 (CPLT…GETA), 173-182 (NVDNTTTAAS), and 191-208 (DSSS…QAVT). An ATP-binding site is contributed by 237–244 (GGAGTGKS). Residues 651-670 (QAYVALSRCTDVANLVIENF) mediate DNA binding.

Belongs to the helicase family. PIF1 subfamily. As to quaternary structure, monomer. Mg(2+) is required as a cofactor.

It is found in the mitochondrion matrix. The protein localises to the kinetoplast. The enzyme catalyses Couples ATP hydrolysis with the unwinding of duplex DNA at the replication fork by translocating in the 5'-3' direction. This creates two antiparallel DNA single strands (ssDNA). The leading ssDNA polymer is the template for DNA polymerase III holoenzyme which synthesizes a continuous strand.. It catalyses the reaction ATP + H2O = ADP + phosphate + H(+). In terms of biological role, DNA-dependent ATPase and 5'-3' DNA helicase required for the maintenance of mitochondrial (kinetoplast) genome stability. The sequence is that of ATP-dependent DNA helicase PIF7 from Trypanosoma brucei brucei (strain 927/4 GUTat10.1).